Consider the following 71-residue polypeptide: Mitotic-spindle organizing protein 1B (71 aa).

This sequence belongs to the MOZART1 family. In terms of assembly, homo- and heteromultimer. Part of the gamma-tubulin complex. Interacts with TUBB2/TUBB3, GIP2, GCP3 and TSA1 (via C-terminal domain). As to expression, mostly expressed in siliques and flowers, and, to a lower extent, in leaves, roots and seedlings, with highest levels in young tissues and meristematic cells, and the vasculature.

It localises to the cytoplasm. The protein localises to the cytoskeleton. Its subcellular location is the microtubule organizing center. The protein resides in the spindle. It is found in the nucleus. It localises to the phragmoplast. The protein localises to the nucleus envelope. Required for gamma-tubulin complex recruitment to the microtubule organizing centers (MTOCs). During mitosis, modulates gamma-tubulin complex localization, spindle stability and chromosomal segregation. Necessary for gametophyte development and embryogenesis. This chain is Mitotic-spindle organizing protein 1B (GIP1), found in Arabidopsis thaliana (Mouse-ear cress).